Reading from the N-terminus, the 371-residue chain is Zygote-specific protein 3 (371 aa).

Positions 1–24 are cleaved as a signal peptide; the sequence is MLRSAGRVAAVALLALFALGCVSA. The N-linked (GlcNAc...) asparagine glycan is linked to asparagine 41. ANK repeat units follow at residues 62-91 and 94-123; these read TRRL…LARV and GTTT…DPNA. 2 consecutive WW domains span residues 159-187 and 283-313; these read EPGA…WAVP and YATP…WELP.

It localises to the endoplasmic reticulum lumen. May have a role in the remodeling of the endoplasmic reticulum upon zygote formation. In Chlamydomonas reinhardtii (Chlamydomonas smithii), this protein is Zygote-specific protein 3 (ZYS3).